We begin with the raw amino-acid sequence, 153 residues long: Cytochrome c oxidase subunit 5A, mitochondrial (153 aa).

A mitochondrion-targeting transit peptide spans 1–20 (MLRNTFTRAGGLSRITSVRF). The Mitochondrial matrix segment spans residues 21–88 (AQTHALSNAA…EWGPRRPVLN (68 aa)). Residues 89 to 111 (KGDSSFIAKGVAAGLLFSVGLFA) form a helical membrane-spanning segment. Residues 112 to 153 (VVRMAGGQDAKTMNKEWQLKSDEYLKSKNANPWGGYSQVQSK) lie on the Mitochondrial intermembrane side of the membrane.

Belongs to the cytochrome c oxidase IV family. In terms of assembly, component of the cytochrome c oxidase (complex IV, CIV), a multisubunit enzyme composed of 12 subunits. The complex is composed of a catalytic core of 3 subunits COX1, COX2 and COX3, encoded in the mitochondrial DNA, and 9 supernumerary subunits COX4, COX5A (or COX5B), COX6, COX7, COX8, COX9, COX12, COX13 and COX26, which are encoded in the nuclear genome. COX5A is the predominant subunit V during aerobic/normoxic growth, it gets replaced by COX5B under anaerobic/hypoxic conditions. The complex exists as a monomer or a dimer and forms supercomplexes (SCs) in the inner mitochondrial membrane with a dimer of ubiquinol-cytochrome c oxidoreductase (cytochrome b-c1 complex, complex III, CIII), resulting in 2 different assemblies (supercomplexes III(2)IV and III(2)IV(2)). COX5A interacts with COR1, CYT1 and QCR6 at the CIII-CIV interface.

The protein resides in the mitochondrion inner membrane. It participates in energy metabolism; oxidative phosphorylation. Its function is as follows. Component of the cytochrome c oxidase, the last enzyme in the mitochondrial electron transport chain which drives oxidative phosphorylation. The respiratory chain contains 3 multisubunit complexes succinate dehydrogenase (complex II, CII), ubiquinol-cytochrome c oxidoreductase (cytochrome b-c1 complex, complex III, CIII) and cytochrome c oxidase (complex IV, CIV), that cooperate to transfer electrons derived from NADH and succinate to molecular oxygen, creating an electrochemical gradient over the inner membrane that drives transmembrane transport and the ATP synthase. Cytochrome c oxidase is the component of the respiratory chain that catalyzes the reduction of oxygen to water. Electrons originating from reduced cytochrome c in the intermembrane space (IMS) are transferred via the dinuclear copper A center (CU(A)) of COX2 and heme A of COX1 to the active site in COX1, a binuclear center (BNC) formed by heme A3 and copper B (CU(B)). The BNC reduces molecular oxygen to 2 water molecules using 4 electrons from cytochrome c in the IMS and 4 protons from the mitochondrial matrix. This Saccharomyces cerevisiae (strain ATCC 204508 / S288c) (Baker's yeast) protein is Cytochrome c oxidase subunit 5A, mitochondrial (COX5A).